The chain runs to 23 residues: Clavanin-B (23 aa).

Phe-23 is subject to Phenylalanine amide.

The protein resides in the secreted. Its function is as follows. Has antimicrobial activity. The protein is Clavanin-B of Styela clava (Sea squirt).